We begin with the raw amino-acid sequence, 148 residues long: Nucleoside diphosphate kinase (148 aa).

Residues Lys-10, Phe-58, Arg-86, Thr-92, Arg-103, and Asn-113 each coordinate ATP. His-116 acts as the Pros-phosphohistidine intermediate in catalysis.

Belongs to the NDK family. It depends on Mg(2+) as a cofactor.

The protein resides in the cytoplasm. The catalysed reaction is a 2'-deoxyribonucleoside 5'-diphosphate + ATP = a 2'-deoxyribonucleoside 5'-triphosphate + ADP. It catalyses the reaction a ribonucleoside 5'-diphosphate + ATP = a ribonucleoside 5'-triphosphate + ADP. Major role in the synthesis of nucleoside triphosphates other than ATP. The ATP gamma phosphate is transferred to the NDP beta phosphate via a ping-pong mechanism, using a phosphorylated active-site intermediate. The protein is Nucleoside diphosphate kinase of Thermoplasma acidophilum (strain ATCC 25905 / DSM 1728 / JCM 9062 / NBRC 15155 / AMRC-C165).